The following is a 621-amino-acid chain: Chaperone protein HtpG (621 aa).

An a; substrate-binding region spans residues 1–328 (MTQEKKKFDA…SEDLPLNISR (328 aa)). A b region spans residues 329-544 (ESLQHNNVLE…DTAMDIRMER (216 aa)). The segment at 545-621 (FLIEQKQIAS…LNDILQKAIL (77 aa)) is c.

It belongs to the heat shock protein 90 family. Homodimer.

The protein localises to the cytoplasm. Functionally, molecular chaperone. Has ATPase activity. The chain is Chaperone protein HtpG from Rickettsia typhi (strain ATCC VR-144 / Wilmington).